Here is an 835-residue protein sequence, read N- to C-terminus: MSQQHTLPVTLSPALSQELLKTVPPPVNTQQEQMKQPTPLPPPCQKVPVELPVEVPSKQEEKHMTAVKGLPEQECEQQQQEPQEQELQQQHWEQHEEHQKAENPEQQLKQEKAQRDQQLNEQLEEEKKLLDQRLDQELVKRDEQLGMKKEQLLELPEQQEQHLKHLEQQEGQLELPEQQEGQLKHLEQQEGQLKHLEQQEGQLEVPEEQVGQLKYLEQQEGQLKHLDQQEGQLKHLDQQEGQLKHLDQQEGQLKHLDQQEGQLKHLDQQEGQLELPEQQEGQLKHLEQQEGQLKHLEHEEGQLEVPEEQVGQLKYLEQQEGQLKHLDQQEGQLELPEQQEGQLKHLEQQEGQLKHLEHQKGQLEVPEEQVGQLKYLEQQEGQLKHLDQQEGQLELPEQQEGQLKHLEQQEGQLKHLEHQEGQLEVPEEQVGQLKYLEQQEGQLKHLDQQEGQLKHLDQQEKQLELPEQQVGQLKHLEQQEGQLEVPEEQVGQLKYLEQQEGQLKHLDQQEGQLELPEQQEGQLKHLEQQEGQLKHLEHQEGQLEVPEEQVGQLKYLEQQEGQLKHLDQQEGQLKHLDQQEKQLELPEQQVGQLKHLEQQEGQLEHLEGQEGQLEHLEHQEGQLGLPEQQVWQLKQLEKQEGQPKNLEEEEGQLKHLVQQEGQLEQQEGQVEHLEEQVGQLKHLEEQEGQLKYLEQQQGQLEVPEQQVGQPKHLEQEEKQLELPEQQEGQLKHLEKQEAQLELPEQQVGQPKHLEQQEKQLEHPEQKDGQLKHLEQQEGQLKNLEQQKGQLEQPVFAPAPGQVQDIQPALPTKGEVLLPVEQQQQKQEVQWPPKHK.

The segment covering 1–15 (MSQQHTLPVTLSPAL) has biased composition (polar residues). Disordered regions lie at residues 1–133 (MSQQ…LDQR), 150–206 (EQLL…LEVP), 221–285 (GQLK…QLKH), 321–342 (GQLKHLDQQEGQLELPEQQEGQ), 381–428 (GQLK…VPEE), 446–486 (LDQQ…LEVP), 501–548 (GQLK…VPEE), and 566–809 (LDQQ…QPAL). The span at 76–91 (EQQQQEPQEQELQQQH) shows a compositional bias: low complexity. 2 stretches are compositionally biased toward basic and acidic residues: residues 92-115 (WEQHEEHQKAENPEQQLKQEKAQR) and 159-168 (QEQHLKHLEQ). Residues 169-181 (QEGQLELPEQQEG) show a composition bias toward low complexity. Composition is skewed to basic and acidic residues over residues 182–198 (QLKHLEQQEGQLKHLEQ) and 222–268 (QLKH…HLDQ). 3 stretches are compositionally biased toward low complexity: residues 269-281 (QEGQLELPEQQEG), 329-341 (QEGQLELPEQQEG), and 389-401 (QEGQLELPEQQEG). Basic and acidic residues-rich tracts occupy residues 402 to 421 (QLKHLEQQEGQLKHLEHQEG) and 446 to 464 (LDQQEGQLKHLDQQEKQLE). Positions 509–521 (QEGQLELPEQQEG) are enriched in low complexity. 3 stretches are compositionally biased toward basic and acidic residues: residues 522-541 (QLKHLEQQEGQLKHLEHQEG), 566-584 (LDQQEGQLKHLDQQEKQLE), and 594-620 (KHLEQQEGQLEHLEGQEGQLEHLEHQE). Over residues 655-668 (HLVQQEGQLEQQEG) the composition is skewed to low complexity. The span at 669–685 (QVEHLEEQVGQLKHLEE) shows a compositional bias: basic and acidic residues. The segment covering 693-710 (LEQQQGQLEVPEQQVGQP) has biased composition (low complexity). Composition is skewed to basic and acidic residues over residues 711–721 (KHLEQEEKQLE), 729–738 (QLKHLEKQEA), and 751–775 (KHLEQQEKQLEHPEQKDGQLKHLEQ). A compositionally biased stretch (polar residues) spans 776 to 789 (QEGQLKNLEQQKGQ).

The protein belongs to the involucrin family. Directly or indirectly cross-linked to cornifelin (CNFN). Post-translationally, substrate of transglutaminase. Specific glutamines or lysines are cross-linked to keratins, desmoplakin and to inter involucrin molecules. In terms of tissue distribution, keratinocytes of epidermis and other stratified squamous epithelia.

It is found in the cytoplasm. Functionally, part of the insoluble cornified cell envelope (CE) of stratified squamous epithelia. This Pongo pygmaeus (Bornean orangutan) protein is Involucrin (IVL).